A 723-amino-acid chain; its full sequence is Catalase-peroxidase (723 aa).

Residues 89–212 (WHSAGTYRTG…LAAVQMGLIY (124 aa)) constitute a cross-link (tryptophyl-tyrosyl-methioninium (Trp-Tyr) (with M-238)). The Proton acceptor role is filled by His-90. Residues 212–238 (YVNPEGPNGDPDPFAAAVDIRETFARM) constitute a cross-link (tryptophyl-tyrosyl-methioninium (Tyr-Met) (with W-89)). Heme b is bound at residue His-253.

The protein belongs to the peroxidase family. Peroxidase/catalase subfamily. In terms of assembly, homodimer or homotetramer. Requires heme b as cofactor. Post-translationally, formation of the three residue Trp-Tyr-Met cross-link is important for the catalase, but not the peroxidase activity of the enzyme.

It carries out the reaction H2O2 + AH2 = A + 2 H2O. The catalysed reaction is 2 H2O2 = O2 + 2 H2O. Its function is as follows. Bifunctional enzyme with both catalase and broad-spectrum peroxidase activity. In Shewanella baltica (strain OS185), this protein is Catalase-peroxidase.